The following is a 726-amino-acid chain: MELGKGKLLRSGLNALYQAIHPVHGLAWTDGRQVVLTALHHNNEEPKFGNSIVVGQFEHVHGLYWGPFLGNDTPALLAVQHKKHVTVWQLCYSSLDKNKLVVSQTCEIGDPFPVLPQGCTWHPSKDILVVLTKRDVSVLYAVRYENTSIKADVKSSGLIHCACWTKDGSRLVVAIGSALHSYIWDSKQKSLNACAFCPVFDIGGYICAIESTVDSQVAVSTELPLDRICALNAGIAFDVPASSEITISSQPGLLLMEEEFSMDVVQKSADSGSLTTDSLATSPATLDLTHIVNHSKADLNSLLNMKKKDYLTGSGQDSSHLILVNFEKKVTTTRRVSIPGILVPDILAFDPTAHIVAVASNTCSAVLVYSLTSSSVPNIQQILLEKNERPKGLCFLTDKMLLVLVGRQKTSDPAFLPSSSSDKYLIRLMVKEVMFDEDSSASSGGNTSVQASFDSSMSIQDKKKLVESLYKEGQSAHREILLPGGVAPPTYLRKKKLIEEIRSYDGDQSPTSSANEFDDKRSKLRVESLDTEPKNRSITLGLDMDKKPNSRPTSPKSECQKSSPPNFIKHGEMSPQQEILSISRNVERLCCNFAHLQQHLSELTDITRNGKRPLSASYLPCRQAPYVTVVCQDAYHPEGPAMKRSILLCDNKLRLGTIQELFGLSLIEMQLGPSLWIILTGDSEGFIPLTFLANQEITIRDARISTTHPPLSMDRNNSLQPSSSVT.

2 WD repeats span residues 55-98 (GQFE…LDKN) and 154-194 (KSSG…LNAC). The tract at residues 503-571 (SYDGDQSPTS…SSPPNFIKHG (69 aa)) is disordered. The span at 506-515 (GDQSPTSSAN) shows a compositional bias: polar residues. The segment covering 517-535 (FDDKRSKLRVESLDTEPKN) has biased composition (basic and acidic residues). The span at 550–565 (SRPTSPKSECQKSSPP) shows a compositional bias: polar residues. The stretch at 581 to 609 (SISRNVERLCCNFAHLQQHLSELTDITRN) forms a coiled coil.

The polypeptide is WD repeat and coiled-coil-containing protein (wdcp) (Xenopus tropicalis (Western clawed frog)).